The primary structure comprises 100 residues: Putative exopolysaccharide production repressor protein y4xQ (100 aa).

The next 2 membrane-spanning stretches (helical) occupy residues 9–29 (ILWL…GSIS) and 35–55 (TMVG…FLLW). Positions 66–100 (TTGQFHGEEQPGDPRIAGTHGRTDGDPCFEDEDSR) are disordered.

It to Rhizobium exopolysaccharide production repressor protein (ExoX).

Its subcellular location is the cell membrane. In terms of biological role, could be involved in the inhibition of exopolysaccharide synthesis (EPS) and nodulation ability (nod). The protein is Putative exopolysaccharide production repressor protein y4xQ of Sinorhizobium fredii (strain NBRC 101917 / NGR234).